The following is a 119-amino-acid chain: MSGHPGLTTHVLDTARGKPAAGVRVQLCRVTGDTRTPVTEAVTNSDGRTDAPLIERGSLKQGTYELTFHVADYFKGFVAAADPPFLDVVTLRFTVGDTSGHYHVPLVMTPWSYSTYRGS.

Residues His10, Arg48, and Tyr116 each contribute to the substrate site.

It belongs to the transthyretin family. 5-hydroxyisourate hydrolase subfamily. In terms of assembly, homotetramer.

It carries out the reaction 5-hydroxyisourate + H2O = 5-hydroxy-2-oxo-4-ureido-2,5-dihydro-1H-imidazole-5-carboxylate + H(+). Its pathway is purine metabolism; urate degradation; (S)-allantoin from urate: step 2/3. Catalyzes the hydrolysis of 5-hydroxyisourate (HIU) to 2-oxo-4-hydroxy-4-carboxy-5-ureidoimidazoline (OHCU). This chain is 5-hydroxyisourate hydrolase, found in Deinococcus radiodurans (strain ATCC 13939 / DSM 20539 / JCM 16871 / CCUG 27074 / LMG 4051 / NBRC 15346 / NCIMB 9279 / VKM B-1422 / R1).